The sequence spans 226 residues: MTDLSPVLTIDGPSGAGKGTVSRIVAARLGWHYLDSGALYRAVGVAASWADLDVSDPAALVRCTFDTKVEFDEAGEAGLRVLVNGVDATGELRLETTGALASAIAAIPEVRSALKERQRAFRQPPGLVADGRDMGTVIFPDAAFKVFLTASAEERAGRRHKQLMEKGVSVIFDDLLREIMARDARDAQRVVAPLRPAEDAVLIDTSGIGIEDVVQRVVGLLDSRTP.

Residue 12–20 (GPSGAGKGT) participates in ATP binding.

This sequence belongs to the cytidylate kinase family. Type 1 subfamily.

It is found in the cytoplasm. It carries out the reaction CMP + ATP = CDP + ADP. The enzyme catalyses dCMP + ATP = dCDP + ADP. This Xanthomonas campestris pv. campestris (strain B100) protein is Cytidylate kinase.